Consider the following 433-residue polypeptide: Glutamate-1-semialdehyde 2,1-aminomutase (433 aa).

Lysine 273 is modified (N6-(pyridoxal phosphate)lysine).

This sequence belongs to the class-III pyridoxal-phosphate-dependent aminotransferase family. HemL subfamily. As to quaternary structure, homodimer. The cofactor is pyridoxal 5'-phosphate.

It is found in the cytoplasm. It carries out the reaction (S)-4-amino-5-oxopentanoate = 5-aminolevulinate. It functions in the pathway porphyrin-containing compound metabolism; protoporphyrin-IX biosynthesis; 5-aminolevulinate from L-glutamyl-tRNA(Glu): step 2/2. It participates in porphyrin-containing compound metabolism; chlorophyll biosynthesis. In Gloeothece citriformis (strain PCC 7424) (Cyanothece sp. (strain PCC 7424)), this protein is Glutamate-1-semialdehyde 2,1-aminomutase.